A 195-amino-acid polypeptide reads, in one-letter code: GTP-dependent dephospho-CoA kinase (195 aa).

GTP is bound by residues aspartate 49, valine 50, aspartate 68, glutamate 127, and aspartate 150.

The protein belongs to the GTP-dependent DPCK family.

It carries out the reaction 3'-dephospho-CoA + GTP = GDP + CoA + H(+). It functions in the pathway cofactor biosynthesis; coenzyme A biosynthesis. In terms of biological role, catalyzes the GTP-dependent phosphorylation of the 3'-hydroxyl group of dephosphocoenzyme A to form coenzyme A (CoA). This chain is GTP-dependent dephospho-CoA kinase, found in Methanosarcina mazei (strain ATCC BAA-159 / DSM 3647 / Goe1 / Go1 / JCM 11833 / OCM 88) (Methanosarcina frisia).